The chain runs to 211 residues: GATA transcription factor 19 (211 aa).

Residues 77 to 102 (CANCDTTSTPLWRNGPRGPKSLCNAC) form a GATA-type zinc finger. The segment at 111-131 (RRASTARNSTSGGGSTAAGVP) is disordered.

This sequence belongs to the type IV zinc-finger family. Class B subfamily. As to quaternary structure, forms heterodimers with GATA18.

Its subcellular location is the nucleus. Functionally, transcriptional regulator that specifically binds 5'-GATA-3' or 5'-GAT-3' motifs within gene promoters. Regulates both flower and shoot apical meristem (SAM) development, especially for establishing organ boundaries in shoots and flowers, probably by controlling the number and position of WUS-expressing cells. This chain is GATA transcription factor 19, found in Arabidopsis thaliana (Mouse-ear cress).